The sequence spans 290 residues: Probable septum site-determining protein MinC (290 aa).

Belongs to the MinC family. In terms of assembly, interacts with MinD and FtsZ.

Cell division inhibitor that blocks the formation of polar Z ring septums. Rapidly oscillates between the poles of the cell to destabilize FtsZ filaments that have formed before they mature into polar Z rings. Prevents FtsZ polymerization. This is Probable septum site-determining protein MinC from Heliobacterium modesticaldum (strain ATCC 51547 / Ice1).